The primary structure comprises 241 residues: 2-C-methyl-D-erythritol 4-phosphate cytidylyltransferase (241 aa).

The protein belongs to the IspD/TarI cytidylyltransferase family. IspD subfamily. In terms of assembly, homodimer.

The catalysed reaction is 2-C-methyl-D-erythritol 4-phosphate + CTP + H(+) = 4-CDP-2-C-methyl-D-erythritol + diphosphate. The protein operates within isoprenoid biosynthesis; isopentenyl diphosphate biosynthesis via DXP pathway; isopentenyl diphosphate from 1-deoxy-D-xylulose 5-phosphate: step 2/6. In terms of biological role, catalyzes the formation of 4-diphosphocytidyl-2-C-methyl-D-erythritol from CTP and 2-C-methyl-D-erythritol 4-phosphate (MEP). This chain is 2-C-methyl-D-erythritol 4-phosphate cytidylyltransferase, found in Yersinia pseudotuberculosis serotype I (strain IP32953).